The sequence spans 157 residues: 6,7-dimethyl-8-ribityllumazine synthase (157 aa).

Residues W27, 59–61 (AIE), and 81–83 (VVI) each bind 5-amino-6-(D-ribitylamino)uracil. Position 86-87 (86-87 (ET)) interacts with (2S)-2-hydroxy-3-oxobutyl phosphate. H89 serves as the catalytic Proton donor. N114 lines the 5-amino-6-(D-ribitylamino)uracil pocket. Residue R128 participates in (2S)-2-hydroxy-3-oxobutyl phosphate binding.

It belongs to the DMRL synthase family. Homopentamer.

It catalyses the reaction (2S)-2-hydroxy-3-oxobutyl phosphate + 5-amino-6-(D-ribitylamino)uracil = 6,7-dimethyl-8-(1-D-ribityl)lumazine + phosphate + 2 H2O + H(+). It participates in cofactor biosynthesis; riboflavin biosynthesis; riboflavin from 2-hydroxy-3-oxobutyl phosphate and 5-amino-6-(D-ribitylamino)uracil: step 1/2. Its function is as follows. Catalyzes the formation of 6,7-dimethyl-8-ribityllumazine by condensation of 5-amino-6-(D-ribitylamino)uracil with 3,4-dihydroxy-2-butanone 4-phosphate. This is the penultimate step in the biosynthesis of riboflavin. The chain is 6,7-dimethyl-8-ribityllumazine synthase from Mycolicibacterium vanbaalenii (strain DSM 7251 / JCM 13017 / BCRC 16820 / KCTC 9966 / NRRL B-24157 / PYR-1) (Mycobacterium vanbaalenii).